Here is a 154-residue protein sequence, read N- to C-terminus: Protein disulfide-isomerase LQY1, chloroplastic (154 aa).

A chloroplast-targeting transit peptide spans 1–43 (MPVSAPSPPRLHSPFIHCPINFTPSSFSARNLRSPSTSYPRIK). A helical membrane pass occupies residues 51–71 (VVAISVGVASVALGIGIPVFY). A CR-type zinc finger spans residues 77 to 147 (NAAKRENTQP…SGVQPRYLDR (71 aa)). 8 residues coordinate Zn(2+): cysteine 87, cysteine 90, cysteine 98, cysteine 101, cysteine 121, cysteine 124, cysteine 132, and cysteine 135.

It belongs to the BSD2 chaperone family. In terms of assembly, interacts with the photosystem II core subunits. Interacts with HHL1. It depends on Zn(2+) as a cofactor.

The protein localises to the plastid. It localises to the chloroplast thylakoid membrane. The enzyme catalyses Catalyzes the rearrangement of -S-S- bonds in proteins.. Functionally, protein disulfide-isomerase probably involved upon formation of a complex with HHL1 in maintaining photosystem II (PSII) activity under high light by regulating repair and reassembly of PSII complexes. This is Protein disulfide-isomerase LQY1, chloroplastic from Arabidopsis thaliana (Mouse-ear cress).